A 170-amino-acid polypeptide reads, in one-letter code: MVKYSTDPANPTKSAKAMGRDLRVHFKNTRETAFALRKMPLNKAKRYLEDVLAHKQAIPFRRYCRGVGRTAQVKNRQPNGQGRWPAKSAKFVLDLLKNAESNAEVKGLDVDALYISHIQVNQAQKQRRRTYRAHGRINPYMSNPCHIELILSEKEEPVKKEAESHIARKA.

The protein belongs to the universal ribosomal protein uL22 family.

In Hordeum vulgare (Barley), this protein is Large ribosomal subunit protein uL22z.